Here is a 286-residue protein sequence, read N- to C-terminus: 2-hydroxy-6-oxononadienedioate/2-hydroxy-6-oxononatrienedioate hydrolase (286 aa).

One can recognise an AB hydrolase-1 domain in the interval 36–271 (VIMLHGGGPG…RCGHWAQWEH (236 aa)). His265 acts as the Proton acceptor in catalysis.

It belongs to the AB hydrolase superfamily. BphD family. As to quaternary structure, homodimer.

The catalysed reaction is (2Z,4E)-2-hydroxy-6-oxonona-2,4-dienedioate + H2O = (2Z)-2-hydroxypenta-2,4-dienoate + succinate + H(+). The enzyme catalyses (2Z,4E,7E)-2-hydroxy-6-oxonona-2,4,7-trienedioate + H2O = (2Z)-2-hydroxypenta-2,4-dienoate + fumarate + H(+). The protein operates within aromatic compound metabolism; 3-phenylpropanoate degradation. Functionally, catalyzes the cleavage of the C5-C6 bond of 2-hydroxy-6-oxononadienedioate, and probably also 2-hydroxy-6-oxononatrienedioate, a dienol ring fission product of the bacterial meta-cleavage pathway for degradation of phenylpropionic acid. The protein is 2-hydroxy-6-oxononadienedioate/2-hydroxy-6-oxononatrienedioate hydrolase (mhpC) of Comamonas testosteroni (Pseudomonas testosteroni).